The following is an 804-amino-acid chain: Endoplasmin (804 aa).

The N-terminal stretch at 1 to 21 is a signal peptide; that stretch reads MRVLWVLGLCCVLLTFGFVRA. Positions 42 to 44 match the SRT pseudosubstrate motif motif; that stretch reads SRT. An N-linked (GlcNAc...) asparagine glycan is attached at Asn62. Ser64 is subject to Phosphoserine. N-linked (GlcNAc...) asparagine glycosylation is present at Asn107. Residues Asn107, Asp149, and Asn162 each contribute to the ATP site. Position 168 is an N6-(2-hydroxyisobutyryl)lysine (Lys168). Residue Ser172 is modified to Phosphoserine. Phe199 is an ATP binding site. N-linked (GlcNAc...) asparagine glycosylation is present at Asn217. A disordered region spans residues 288 to 323; it reads TVEEPLEEDETAQEEKEEADDEAAVEEEEEEKKPKT. A compositionally biased stretch (acidic residues) spans 289-317; the sequence is VEEPLEEDETAQEEKEEADDEAAVEEEEE. Residue Ser403 is modified to Phosphoserine. The residue at position 404 (Lys404) is an N6-succinyllysine. A glycan (N-linked (GlcNAc...) asparagine) is linked at Asn445. At Ser447 the chain carries Phosphoserine. The residue at position 479 (Lys479) is an N6-acetyllysine. Residues Asn481 and Asn502 are each glycosylated (N-linked (GlcNAc...) asparagine). Residue Lys633 is modified to N6-succinyllysine. The disordered stretch occupies residues 749–804; it reads IDPEAQVEEEPEEEPEDTTEDTTDDSEQDEEETDAGAEEEEEEQETEKEPTEKDEL. Acidic residues predominate over residues 753–794; the sequence is AQVEEEPEEEPEDTTEDTTDDSEQDEEETDAGAEEEEEEQET. Residues 795–804 show a composition bias toward basic and acidic residues; that stretch reads EKEPTEKDEL. The Prevents secretion from ER signature appears at 801-804; the sequence is KDEL.

This sequence belongs to the heat shock protein 90 family. As to quaternary structure, homodimer; disulfide-linked. Component of an EIF2 complex at least composed of CELF1/CUGBP1, CALR, CALR3, EIF2S1, EIF2S2, HSP90B1 and HSPA5. Part of a large chaperone multiprotein complex comprising DNAJB11, HSP90B1, HSPA5, HYOU, PDIA2, PDIA4, PDIA6, PPIB, SDF2L1, UGGT1 and very small amounts of ERP29, but not, or at very low levels, CALR nor CANX. Interacts with AIMP1; regulates its retention in the endoplasmic reticulum. Hyperglycosylated form interacts with OS9; promoting its degradation by the endoplasmic reticulum associated degradation (ERAD). Interacts with CNPY3. This interaction is disrupted in the presence of ATP. Interacts with TLR4 and TLR9, but not with TLR3. Interacts with MZB1 in a calcium-dependent manner. Interacts with METTL23. Interacts with IL1B; the interaction facilitates cargo translocation into the ERGIC. Interacts with EIF2AK3. Post-translationally, phosphorylated by CK2. In terms of processing, N-glycosylated cotranslationally at Asn-217 by STT3A-containing OST-A complex: this glycosylation is constitutive. In response to various stress, 5 additional facultative sites (Asn-62, Asn-107, Asn-445, Asn-481 and Asn-502) can be glycosylated post-translationally by STT3B-containing OST-B complex, leading to a hyperglycosylated form that is degraded by the ER-associated degradation (ERAD) pathway. In normal conditions, the OST-A complex together with CCDC134 prevent glycosylation at facultative sites during protein folding, thereby preventing hyperglycosylation. Mechanistically, nascent HSP90B1 is tethered during translation to a specialized CCDC134-containing translocon that forms a microenvironment for its folding, in which STT3A associates with the SRT pseudosubstrate motif, and prevents access to facultative glycosylation sites until folding is completed, rendering its facultative sites inaccessible to the OST-B complex.

The protein localises to the endoplasmic reticulum lumen. It is found in the sarcoplasmic reticulum lumen. It localises to the melanosome. It carries out the reaction ATP + H2O = ADP + phosphate + H(+). Functionally, ATP-dependent chaperone involved in the processing of proteins in the endoplasmic reticulum, regulating their transport. Together with MESD, acts as a modulator of the Wnt pathway by promoting the folding of LRP6, a coreceptor of the canonical Wnt pathway. When associated with CNPY3, required for proper folding of Toll-like receptors. Promotes folding and trafficking of TLR4 to the cell surface. May participate in the unfolding of cytosolic leaderless cargos (lacking the secretion signal sequence) such as the interleukin 1/IL-1 to facilitate their translocation into the ERGIC (endoplasmic reticulum-Golgi intermediate compartment) and secretion; the translocation process is mediated by the cargo receptor TMED10. This chain is Endoplasmin, found in Rattus norvegicus (Rat).